The following is a 401-amino-acid chain: MHCDVLWHNAQLMTLDAAAGGLGIVDDGIVACRHGHIVYAGAAAQAPALQPDTAHDCQRRWISPGLIDCHTHLVYAGNRANEFEQRLRGASYADIAAAGGGIVATVRATRAADDAALLAASLPRLDAMLAEGVTTLEIKSGYGLALDDEIKQLRVARQLGAQRKVEVVPTFLGAHAVPPGEQAQPYIDQVCTQMIPAIAAQGLAEAVDVFCEHLAFSQAQAEQVFIAAQAHGLRIKIHAEQLSNQHGAELAARYGALSADHIEYLDQHGVAAMAAAGTVAVLLPGAFYFTRDTQLPPIAALRTAGVPLALATDCNPGTSPLTSPLLAMNMAATLFRMTVDECIAGFTREAARALGRSERLGQLRAGMDCDLAIWNIDAPADLVYRMGFNPLHARVWRGHPC.

Fe(3+) contacts are provided by His70 and His72. The Zn(2+) site is built by His70 and His72. Residues Arg79, Tyr142, and His175 each coordinate 4-imidazolone-5-propanoate. Tyr142 provides a ligand contact to N-formimidoyl-L-glutamate. His238 lines the Fe(3+) pocket. Residue His238 coordinates Zn(2+). Gln241 is a binding site for 4-imidazolone-5-propanoate. Residue Asp313 participates in Fe(3+) binding. Residue Asp313 participates in Zn(2+) binding. 2 residues coordinate N-formimidoyl-L-glutamate: Asn315 and Gly317. Thr318 provides a ligand contact to 4-imidazolone-5-propanoate.

This sequence belongs to the metallo-dependent hydrolases superfamily. HutI family. Zn(2+) is required as a cofactor. Fe(3+) serves as cofactor.

Its subcellular location is the cytoplasm. It carries out the reaction 4-imidazolone-5-propanoate + H2O = N-formimidoyl-L-glutamate. It functions in the pathway amino-acid degradation; L-histidine degradation into L-glutamate; N-formimidoyl-L-glutamate from L-histidine: step 3/3. Functionally, catalyzes the hydrolytic cleavage of the carbon-nitrogen bond in imidazolone-5-propanoate to yield N-formimidoyl-L-glutamate. It is the third step in the universal histidine degradation pathway. The protein is Imidazolonepropionase of Xanthomonas axonopodis pv. citri (strain 306).